A 149-amino-acid polypeptide reads, in one-letter code: DnaJ homolog subfamily C member 24 (149 aa).

The J domain maps to 11–82 (DWYSILGADP…ETKKEYDLQR (72 aa)). The DPH-type MB domain maps to 93–148 (VDARIYLEEMSWNEDDHSFSLSCRCGGKYSVSKDEAEEVTLISCDTCSLIIELLHY). 4 residues coordinate Zn(2+): cysteine 115, cysteine 117, cysteine 136, and cysteine 139.

This sequence belongs to the DPH4 family. In terms of assembly, monomer and homooligomer. Iron binding promotes oligomerization.

It is found in the cytoplasm. It localises to the cytoskeleton. It functions in the pathway protein modification; peptidyl-diphthamide biosynthesis. Functionally, stimulates the ATPase activity of several Hsp70-type chaperones. This ability is enhanced by iron-binding. The iron-bound form is redox-active and can function as electron carrier. Plays a role in the diphthamide biosynthesis, a post-translational modification of histidine which occurs in translation elongation factor 2 (EEF2). The sequence is that of DnaJ homolog subfamily C member 24 (DNAJC24) from Bos taurus (Bovine).